The following is a 711-amino-acid chain: MEPLMSFKQKNDYGLHALVILAQYHNIAVSPEEIKHKFDPEGKGIDLVAWLLAAKSFELKAKKVKKSIDRLPFIHLPALIWRDDGQHFILTKIDTQTNRYLIFDLEERNPKVLSAVEFQQVFQGNVILLTSRASIMGKLAKFDFTWFIPAIIKYRKIFVEVMIVSIFLQLFALITPLFFQVVMDKVLVHRGFSTLNVITVALAIVVIFEIVLSGLRTYVFSHSTSRIDVELGAKLFRHLLALPISYFENRRVGDTVARVRELDQIRNFLTGQALTSVLDLLFSFIFFAVMWYYSPKLTIVILLSLPCYIAWSIFISPILRRRLDEKFTRNADNQAFLVESVTAIDTIKALAVTPQMTNIWDKQLASYVSADFRVTVLATIGQQGVQLIQKTVMIINLWLGAHLVISGDLSIGQLIAFNMLSGQVIAPVIRLAQLWQDFQQVGISITRLGDVLNAPTENFQGKLSLPEINGDVTFKNIRFRYKPDAPIILNDVNLTIKQGEVIGIVGRSGSGKSTLTKLLQRFYIPENGQVLIDGHDLALADPNWLRRQIGVVLQDNVLLNRSIRDNIALTDPSMPMEQVIHAAKLAGAHDFISELREGYNTMVGEQGAGLSGGQRQRIAIARALVNNPRILIFDEATSALDYESEHIIMRNMQQICHGRTVIIIAHRLSTVRKADRIIVMEKGHIVERGKHSELLENKDGLYYYLNQLQSI.

One can recognise a Peptidase C39 domain in the interval 1 to 129; sequence MEPLMSFKQK…QVFQGNVILL (129 aa). Transmembrane regions (helical) follow at residues 157–177, 195–215, 273–293, 299–319, and 392–412; these read IFVE…ITPL, LNVI…LSGL, ALTS…MWYY, IVIL…SPIL, and VMII…LSIG. Residues 158 to 440 enclose the ABC transmembrane type-1 domain; sequence FVEVMIVSIF…LAQLWQDFQQ (283 aa). Residues 472–707 enclose the ABC transporter domain; that stretch reads VTFKNIRFRY…KDGLYYYLNQ (236 aa). Residue 506–513 participates in ATP binding; the sequence is GRSGSGKS.

It belongs to the ABC transporter superfamily. Protein-1 exporter (TC 3.A.1.109) family. Homodimer.

It localises to the cell inner membrane. The catalysed reaction is ATP + H2O + proteinSide 1 = ADP + phosphate + proteinSide 2.. In terms of biological role, part of the ABC transporter complex PaxBD involved in PaxA export. Transmembrane domains (TMD) form a pore in the inner membrane and the ATP-binding domain (NBD) is responsible for energy generation. This is Exotoxin translocation ATP-binding protein PaxB (paxB) from Pasteurella aerogenes.